A 172-amino-acid chain; its full sequence is NADH-ubiquinone oxidoreductase chain 6 (172 aa).

Transmembrane regions (helical) follow at residues 1–21 (MTYF…AVAS), 25–45 (PYFA…VLVG), 53–73 (LVLF…AALA), 86–106 (VLGY…IFWG), and 140–160 (GGML…VLEL).

This sequence belongs to the complex I subunit 6 family.

It localises to the mitochondrion membrane. The catalysed reaction is a ubiquinone + NADH + 5 H(+)(in) = a ubiquinol + NAD(+) + 4 H(+)(out). In terms of biological role, core subunit of the mitochondrial membrane respiratory chain NADH dehydrogenase (Complex I) that is believed to belong to the minimal assembly required for catalysis. Complex I functions in the transfer of electrons from NADH to the respiratory chain. The immediate electron acceptor for the enzyme is believed to be ubiquinone. The chain is NADH-ubiquinone oxidoreductase chain 6 (MT-ND6) from Cyprinus carpio (Common carp).